A 1803-amino-acid chain; its full sequence is Transposon Ty4-J Gag-Pol polyprotein (1803 aa).

Positions 39-115 (RKVSIKDEQV…IQLLETNENN (77 aa)) form a coiled coil. The tract at residues 382–502 (NNHLSPVQNE…KTKMVLSRKY (121 aa)) is ty4 protease. Residue Asp-415 is the For protease activity; shared with dimeric partner of the active site. An integrase-type zinc finger-like region spans residues 540–600 (AIKPTSSPGF…EPNEFWCQTC (61 aa)). Residues 620-787 (TDHEPGSSWC…LPLKAISRQP (168 aa)) enclose the Integrase catalytic domain. Positions 631 and 696 each coordinate Mg(2+). A disordered region spans residues 1224–1250 (KRKRKRHDKNNSLTSYELERDKKRSKK). Positions 1376-1511 (RNMFMKTLDI…DILGMDLVYN (136 aa)) constitute a Reverse transcriptase Ty1/copia-type domain. Residues Asp-1384, Asp-1463, Asp-1464, Asp-1645, Glu-1687, and Asp-1721 each coordinate Mg(2+). Positions 1645-1791 (DASVGSEYDA…KRFIQVLKNK (147 aa)) constitute an RNase H Ty1/copia-type domain.

The protease is a homodimer, whose active site consists of two apposed aspartic acid residues. Proteolytically processed into capsid protein (CA), Ty4 protease (PR), integrase (IN) and reverse transcriptase/ribonuclease H (RT) proteins. Initially, virus-like particles (VLPs) are composed of the structural unprocessed proteins Gag and Gag-Pol, and also contain the host initiator methionine tRNA (tRNA(i)-Met) which serves as a primer for minus-strand DNA synthesis, and a dimer of genomic Ty RNA. Processing of the polyproteins occurs within the particle and proceeds by an ordered pathway, called maturation. First, the protease (PR) is released by autocatalytic cleavage of the Gag-Pol polyprotein, and this cleavage is a prerequisite for subsequent processing at the remaining sites to release the mature structural and catalytic proteins. Maturation takes place prior to the RT reaction and is required to produce transposition-competent VLPs.

It is found in the cytoplasm. The protein resides in the nucleus. It carries out the reaction DNA(n) + a 2'-deoxyribonucleoside 5'-triphosphate = DNA(n+1) + diphosphate. The catalysed reaction is Endonucleolytic cleavage to 5'-phosphomonoester.. Functionally, capsid protein (CA) is the structural component of the virus-like particle (VLP), forming the shell that encapsulates the retrotransposons dimeric RNA genome. The aspartyl protease (PR) mediates the proteolytic cleavages of the Gag and Gag-Pol polyproteins after assembly of the VLP. Its function is as follows. Reverse transcriptase/ribonuclease H (RT) is a multifunctional enzyme that catalyzes the conversion of the retro-elements RNA genome into dsDNA within the VLP. The enzyme displays a DNA polymerase activity that can copy either DNA or RNA templates, and a ribonuclease H (RNase H) activity that cleaves the RNA strand of RNA-DNA heteroduplexes during plus-strand synthesis and hydrolyzes RNA primers. The conversion leads to a linear dsDNA copy of the retrotransposon that includes long terminal repeats (LTRs) at both ends. In terms of biological role, integrase (IN) targets the VLP to the nucleus, where a subparticle preintegration complex (PIC) containing at least integrase and the newly synthesized dsDNA copy of the retrotransposon must transit the nuclear membrane. Once in the nucleus, integrase performs the integration of the dsDNA into the host genome. The protein is Transposon Ty4-J Gag-Pol polyprotein (TY4B-J) of Saccharomyces cerevisiae (strain ATCC 204508 / S288c) (Baker's yeast).